A 443-amino-acid polypeptide reads, in one-letter code: ATP-dependent protease ATPase subunit HslU (443 aa).

Residues Ile-20, 62 to 67 (GVGKTE), Asp-255, Glu-321, and Arg-393 contribute to the ATP site.

It belongs to the ClpX chaperone family. HslU subfamily. In terms of assembly, a double ring-shaped homohexamer of HslV is capped on each side by a ring-shaped HslU homohexamer. The assembly of the HslU/HslV complex is dependent on binding of ATP.

The protein resides in the cytoplasm. Its function is as follows. ATPase subunit of a proteasome-like degradation complex; this subunit has chaperone activity. The binding of ATP and its subsequent hydrolysis by HslU are essential for unfolding of protein substrates subsequently hydrolyzed by HslV. HslU recognizes the N-terminal part of its protein substrates and unfolds these before they are guided to HslV for hydrolysis. The protein is ATP-dependent protease ATPase subunit HslU of Helicobacter pylori (strain Shi470).